A 401-amino-acid polypeptide reads, in one-letter code: Tetracycline resistance protein, class B (401 aa).

Topologically, residues 1-6 (MNSSTK) are cytoplasmic. Residues 7–30 (IALVITLLDAMGIGLIMPVLPTLL) traverse the membrane as a helical segment. Residues 31–42 (REFIASEDIANH) are Periplasmic-facing. The helical transmembrane segment at 43–61 (FGVLLALYALMQVIFAPWL) threads the bilayer. Residues 62-71 (GKMSDRFGRR) lie on the Cytoplasmic side of the membrane. The chain crosses the membrane as a helical span at residues 72 to 91 (PVLLLSLIGASLDYLLLAFS). At 92–98 (SALWMLY) the chain is on the periplasmic side. The chain crosses the membrane as a helical span at residues 99–119 (LGRLLSGITGATGAVAASVIA). At 120 to 129 (DTTSASQRVK) the chain is on the cytoplasmic side. The helical transmembrane segment at 130 to 152 (WFGWLGASFGLGLIAGPIIGGFA) threads the bilayer. At 153 to 158 (GEISPH) the chain is on the periplasmic side. A helical transmembrane segment spans residues 159 to 178 (SPFFIAALLNIVTFLVVMFW). At 179 to 211 (FRETKNTRDNTDTEVGVETQSNSVYITLFKTMP) the chain is on the cytoplasmic side. The helical transmembrane segment at 212-232 (ILLIIYFSAQLIGQIPATVWV) threads the bilayer. The Periplasmic segment spans residues 233-243 (LFTENRFGWNS). A helical transmembrane segment spans residues 244-265 (MMVGFSLAGLGLLHSVFQAFVA). Residues 266–275 (GRIATKWGEK) lie on the Cytoplasmic side of the membrane. A helical membrane pass occupies residues 276 to 295 (TAVLLGFIADSSAFAFLAFI). The Periplasmic portion of the chain corresponds to 296–298 (SEG). The helical transmembrane segment at 299–322 (WLVFPVLILLAGGGIALPALQGVM) threads the bilayer. At 323-332 (SIQTKSHQQG) the chain is on the cytoplasmic side. The chain crosses the membrane as a helical span at residues 333 to 356 (ALQGLLVSLTNATGVIGPLLFAVI). Residues 357–365 (YNHSLPIWD) are Periplasmic-facing. The helical transmembrane segment at 366–387 (GWIWIIGLAFYCIIILLSMTFM) threads the bilayer. At 388–401 (LTPQAQGSKQETSA) the chain is on the cytoplasmic side.

It belongs to the major facilitator superfamily. TCR/Tet family.

The protein localises to the cell inner membrane. Functionally, resistance to tetracycline by an active tetracycline efflux. This is an energy-dependent process that decreases the accumulation of the antibiotic in whole cells. This protein functions as a metal-tetracycline/H(+) antiporter. This chain is Tetracycline resistance protein, class B (tetA), found in Escherichia coli.